Reading from the N-terminus, the 294-residue chain is MLITDIINQASSQLREAGIETPEHDAKLLLAEAAGVELRDVDRALLMGEELGTTGQLAVFRAMLDRRAKREPLQYITGHAPFRYLDLKVGPGVFIPRPETETVVQAGLDWLTKNGMIHPCVVDLCAGSGAIGLSVVSEVPGSQVWAVELSPNTAEWTRRNLSETAKKYPSIASNYHLEIADATSFATLAQLDGTVDIVITNPPYVPQTDIPEQPEVRDWDPELALYGGSMDGTLIPERIIERACRLLKPGGVLVMEHDVTQGDRLVAFARATGFAAASTGQDWTGRDRYLFAVS.

Residues Glu-148 and Asn-201 each coordinate S-adenosyl-L-methionine. 201–204 (NPPY) provides a ligand contact to substrate.

The protein belongs to the protein N5-glutamine methyltransferase family. PrmC subfamily.

The catalysed reaction is L-glutaminyl-[peptide chain release factor] + S-adenosyl-L-methionine = N(5)-methyl-L-glutaminyl-[peptide chain release factor] + S-adenosyl-L-homocysteine + H(+). Its function is as follows. Methylates the class 1 translation termination release factors RF1/PrfA and RF2/PrfB on the glutamine residue of the universally conserved GGQ motif. In Bifidobacterium longum (strain NCC 2705), this protein is Release factor glutamine methyltransferase.